Reading from the N-terminus, the 450-residue chain is Ornithine decarboxylase (450 aa).

The residue at position 59 (Lys59) is an N6-(pyridoxal phosphate)lysine. Residues Ser190, Gly227, and 264-267 (EPGR) each bind pyridoxal 5'-phosphate. The residue at position 293 (Ser293) is a Phosphoserine; by CK2. 321-322 (YD) contacts substrate. The active-site Proton donor; shared with dimeric partner is the Cys350. Residue Asp351 coordinates substrate. A pyridoxal 5'-phosphate-binding site is contributed by Tyr379.

It belongs to the Orn/Lys/Arg decarboxylase class-II family. Homodimer. Only the dimer is catalytically active, as the active sites are constructed of residues from both monomers. It depends on pyridoxal 5'-phosphate as a cofactor.

The enzyme catalyses L-ornithine + H(+) = putrescine + CO2. Its pathway is amine and polyamine biosynthesis; putrescine biosynthesis via L-ornithine pathway; putrescine from L-ornithine: step 1/1. Its activity is regulated as follows. Inhibited by antizymes (AZs) in response to polyamine levels. AZs inhibit the assembly of the functional homodimer by binding to ODC monomers and targeting them for ubiquitin-independent proteolytic destruction by the 26S proteasome. In terms of biological role, catalyzes the first and rate-limiting step of polyamine biosynthesis that converts ornithine into putrescine, which is the precursor for the polyamines, spermidine and spermine. Polyamines are essential for cell proliferation and are implicated in cellular processes, ranging from DNA replication to apoptosis. This is Ornithine decarboxylase (ODC1) from Gallus gallus (Chicken).